Reading from the N-terminus, the 970-residue chain is Glycine dehydrogenase (decarboxylating) (970 aa).

Position 723 is an N6-(pyridoxal phosphate)lysine (K723).

The protein belongs to the GcvP family. In terms of assembly, the glycine cleavage system is composed of four proteins: P, T, L and H. Requires pyridoxal 5'-phosphate as cofactor.

The catalysed reaction is N(6)-[(R)-lipoyl]-L-lysyl-[glycine-cleavage complex H protein] + glycine + H(+) = N(6)-[(R)-S(8)-aminomethyldihydrolipoyl]-L-lysyl-[glycine-cleavage complex H protein] + CO2. Its function is as follows. The glycine cleavage system catalyzes the degradation of glycine. The P protein binds the alpha-amino group of glycine through its pyridoxal phosphate cofactor; CO(2) is released and the remaining methylamine moiety is then transferred to the lipoamide cofactor of the H protein. This chain is Glycine dehydrogenase (decarboxylating), found in Burkholderia pseudomallei (strain 1106a).